A 230-amino-acid polypeptide reads, in one-letter code: Fibrillarin-like rRNA/tRNA 2'-O-methyltransferase (230 aa).

S-adenosyl-L-methionine is bound by residues 87–88, 105–106, 130–131, and 150–153; these read TT, EF, DA, and DVAQ.

This sequence belongs to the methyltransferase superfamily. Fibrillarin family. Interacts with nop5. Component of box C/D small ribonucleoprotein (sRNP) particles that contain rpl7ae, FlpA and nop5, plus a guide RNA.

Involved in pre-rRNA and tRNA processing. Utilizes the methyl donor S-adenosyl-L-methionine to catalyze the site-specific 2'-hydroxyl methylation of ribose moieties in rRNA and tRNA. Site specificity is provided by a guide RNA that base pairs with the substrate. Methylation occurs at a characteristic distance from the sequence involved in base pairing with the guide RNA. This chain is Fibrillarin-like rRNA/tRNA 2'-O-methyltransferase, found in Methanococcus maripaludis (strain DSM 14266 / JCM 13030 / NBRC 101832 / S2 / LL).